The primary structure comprises 428 residues: Pregnancy-specific beta-1-glycoprotein 3 (428 aa).

The signal sequence occupies residues 1 to 34 (MGPLSAPPCTQRITWKGLLLTALLLNFWNLPTTA). Positions 35–144 (QVTIEAEPTK…TGHFTFTLYL (110 aa)) constitute an Ig-like V-type domain. N-linked (GlcNAc...) asparagine glycans are attached at residues Asn-104 and Asn-111. Positions 127–129 (RGD) match the Cell attachment site motif. Ig-like C2-type domains lie at 147-234 (PKPS…VTLN), 240-327 (PKPY…VTLN), and 335-410 (PRIY…KSMT). 3 disulfides stabilise this stretch: Cys-169-Cys-217, Cys-262-Cys-310, and Cys-354-Cys-394. Asn-268 and Asn-303 each carry an N-linked (GlcNAc...) asparagine glycan.

It belongs to the immunoglobulin superfamily. CEA family.

It localises to the secreted. The protein is Pregnancy-specific beta-1-glycoprotein 3 (PSG3) of Homo sapiens (Human).